The primary structure comprises 468 residues: WD repeat-containing protein 55 homolog (468 aa).

The segment at 1–107 is disordered; that stretch reads MRNFNSPKFG…VPKRVIDDYD (107 aa). 3 stretches are compositionally biased toward acidic residues: residues 15–26, 41–58, and 67–91; these read DDSDDDDFDSGT, PITEEIEEIEGDDEEYNP, and SDDEDDSDDSDSDKEQENGGEDGED. WD repeat units lie at residues 134-173, 178-217, 221-259, 262-301, 304-343, and 388-427; these read KTEDFVTDLCFHPDQDLLAVGTTTGDVIVYKFTNDECTIV, THTKSVRDVEFNADGDLLISTARDRSIMVTDVETGKLKRF, AHEEPVYTMSMITEHTFATGDDGGVLKLWDLRQKDPVFK, EVEDFISCIITNEQKKYLLMTSGDGYLTTINIPQRKMYVQ, PYEEELTCMGVFRRDSKLVVGSSKGNFYTFNWGQFGYHCD, and QHSLAVETMDINSTGELIASSSHDNDIRFWNIKYFEEFDD.

Belongs to the WD repeat WDR55 family.

In Aedes aegypti (Yellowfever mosquito), this protein is WD repeat-containing protein 55 homolog.